A 168-amino-acid polypeptide reads, in one-letter code: MSVMASDKACAPVRASRPFPKQKLRELVLQALYALEIDPEGEDSLVSLLMTEASVSKKNAAYALMFCRAIRANQPDLDALLDATIRTTTLARLTIIERNILRMMLFEHQQNQDCCPVPVAVLIAETTRLIKKFSYSEGSSLILAVLGSIFDHPAPALDAPLEPTSMCG.

Belongs to the NusB family.

Involved in transcription antitermination. Required for transcription of ribosomal RNA (rRNA) genes. Binds specifically to the boxA antiterminator sequence of the ribosomal RNA (rrn) operons. The chain is Transcription antitermination protein NusB from Chlamydia trachomatis serovar D (strain ATCC VR-885 / DSM 19411 / UW-3/Cx).